The primary structure comprises 3095 residues: Centrosome-associated protein 350 (3095 aa).

2 disordered regions span residues methionine 1 to glutamine 24 and threonine 63 to leucine 105. Residues proline 14 to glutamine 24 show a composition bias toward polar residues. Residues serine 84 and serine 140 each carry the phosphoserine modification. 3 disordered regions span residues aspartate 219–methionine 239, serine 251–glutamine 272, and lysine 430–serine 493. Residues serine 228–asparagine 238 show a composition bias toward polar residues. The span at serine 251 to serine 265 shows a compositional bias: low complexity. Composition is skewed to basic and acidic residues over residues methionine 438 to alanine 457 and glycine 464 to histidine 476. Position 468 is a phosphoserine (serine 468). The span at arginine 481 to alanine 491 shows a compositional bias: low complexity. Position 503 is a phosphoserine (serine 503). Disordered regions lie at residues glutamine 538 to lysine 623 and alanine 671 to proline 718. Basic and acidic residues-rich tracts occupy residues tyrosine 587–lysine 623 and glutamate 690–glutamate 699. Positions isoleucine 596 to threonine 641 form a coiled coil. Serine 691 is modified (phosphoserine). Residues proline 701–glutamate 714 are compositionally biased toward low complexity. 2 positions are modified to phosphoserine: serine 874 and serine 935. The tract at residues serine 977–arginine 996 is disordered. Residues serine 979 to serine 988 are compositionally biased toward low complexity. Serine 1057 carries the post-translational modification Phosphoserine. Disordered regions lie at residues tyrosine 1099–leucine 1128 and glutamine 1151–leucine 1265. Residues leucine 1119–leucine 1128 are compositionally biased toward polar residues. Positions serine 1153–serine 1168 are enriched in low complexity. Positions aspartate 1194–serine 1206 are enriched in basic and acidic residues. The residue at position 1200 (serine 1200) is a Phosphoserine. Residues glutamine 1251–leucine 1265 are compositionally biased toward low complexity. Position 1253 is a phosphothreonine (threonine 1253). Serine 1256 and serine 1259 each carry phosphoserine. Positions isoleucine 1363–valine 1402 form a coiled coil. Disordered stretches follow at residues alanine 1490 to serine 1668, leucine 1720 to leucine 1739, lysine 1787 to glutamine 1864, and alanine 1893 to serine 2017. A compositionally biased stretch (basic and acidic residues) spans glutamine 1503–arginine 1513. Composition is skewed to low complexity over residues serine 1517–serine 1526 and serine 1536–proline 1545. A compositionally biased stretch (basic and acidic residues) spans lysine 1551–serine 1564. Residue serine 1606 is modified to Phosphoserine. Basic and acidic residues predominate over residues glutamate 1624–aspartate 1640. A phosphoserine mark is found at serine 1641 and serine 1646. Positions lysine 1700 to glutamate 1793 form a coiled coil. The segment covering lysine 1787 to leucine 1796 has biased composition (basic and acidic residues). Serine 1812 is modified (phosphoserine). The segment covering glutamate 1819–serine 1835 has biased composition (low complexity). Composition is skewed to basic and acidic residues over residues serine 1845–glutamine 1864 and tryptophan 1894–glutamine 1915. A coiled-coil region spans residues lysine 1850–alanine 1893. Phosphoserine is present on serine 1930. Low complexity predominate over residues serine 1980 to serine 1994. Residues glutamate 1999–cysteine 2011 are compositionally biased toward basic and acidic residues. Positions isoleucine 2043 to glutamate 2092 form a coiled coil. Residue serine 2108 is modified to Phosphoserine. Disordered regions lie at residues lysine 2116 to alanine 2155, isoleucine 2191 to alanine 2265, leucine 2286 to glutamate 2427, and valine 2440 to glutamate 2471. Residues histidine 2133 to arginine 2151 show a composition bias toward basic and acidic residues. A Phosphoserine modification is found at serine 2198. Composition is skewed to basic and acidic residues over residues serine 2202–leucine 2214 and asparagine 2227–serine 2259. The segment covering leucine 2286 to glutamine 2300 has biased composition (polar residues). Over residues aspartate 2301–proline 2331 the composition is skewed to basic and acidic residues. A compositionally biased stretch (polar residues) spans aspartate 2349 to serine 2362. 2 stretches are compositionally biased toward basic and acidic residues: residues isoleucine 2377–serine 2387 and leucine 2395–glutamine 2407. Residues threonine 2409–glycine 2420 are compositionally biased toward low complexity. Phosphoserine is present on residues serine 2421 and serine 2450. A compositionally biased stretch (basic and acidic residues) spans methionine 2455 to histidine 2465. Positions glycine 2504–proline 2546 constitute a CAP-Gly domain. Residue threonine 2671 is modified to Phosphothreonine. Residues leucine 2700–threonine 2731 adopt a coiled-coil conformation. The segment at glutamine 2767–serine 2793 is disordered. A compositionally biased stretch (polar residues) spans leucine 2780–valine 2791. Residues serine 2809 and serine 2818 each carry the phosphoserine modification.

Part of a ternary complex that contains CEP350, CEP43 and MAPRE1. Interacts (via C-terminus) directly with CEP43 (via N-terminus). Interacts with NR1H3, PPARA, PPARD and PPARG. Interacts directly with microtubules. Interacts with the fusion protein CEP43-FGFR1, and by doing so recruits and activates PI3K and PLC-gamma. Interacts with CYLD. Interacts with CFAP157. Interacts with CEP19 (via C-terminus). Interacts with CEP78; promoting CEP78 localization to centrosome and centriole. Phosphorylated during mitosis.

It is found in the cytoplasm. The protein resides in the cytoskeleton. The protein localises to the microtubule organizing center. It localises to the centrosome. Its subcellular location is the spindle. It is found in the nucleus. The protein resides in the centriole. The protein localises to the cilium basal body. Functionally, plays an essential role in centriole growth by stabilizing a procentriolar seed composed of at least, SASS6 and CPAP. Required for anchoring microtubules to the centrosomes and for the integrity of the microtubule network. Recruits PPARA to discrete subcellular compartments and thereby modulates PPARA activity. Required for ciliation. The sequence is that of Centrosome-associated protein 350 from Mus musculus (Mouse).